The following is a 341-amino-acid chain: Phosphoribosylformylglycinamidine cyclo-ligase (341 aa).

It belongs to the AIR synthase family.

Its subcellular location is the cytoplasm. The enzyme catalyses 2-formamido-N(1)-(5-O-phospho-beta-D-ribosyl)acetamidine + ATP = 5-amino-1-(5-phospho-beta-D-ribosyl)imidazole + ADP + phosphate + H(+). It participates in purine metabolism; IMP biosynthesis via de novo pathway; 5-amino-1-(5-phospho-D-ribosyl)imidazole from N(2)-formyl-N(1)-(5-phospho-D-ribosyl)glycinamide: step 2/2. In Xanthomonas campestris pv. campestris (strain B100), this protein is Phosphoribosylformylglycinamidine cyclo-ligase.